Consider the following 182-residue polypeptide: CASP-like protein 2B1 (182 aa).

Residues 1-12 are Cytoplasmic-facing; the sequence is MKLIDRRMRLTE. Residues 13-31 form a helical membrane-spanning segment; sequence LLLRCSISVFALLALILVV. Over 32–52 the chain is Extracellular; it reads TDTEVKLIFTIKKTAKYTDMK. A helical membrane pass occupies residues 53 to 73; sequence AVVFLVVANGIAAVYSLLQSV. At 74–89 the chain is on the cytoplasmic side; that stretch reads RCVVGTMKGKVLFSKP. Residues 90 to 110 form a helical membrane-spanning segment; that stretch reads LAWAFFSGDQAMAYLNVAAIA. Residues 111–141 lie on the Extracellular side of the membrane; that stretch reads ATAESGVIAREGEEDLQWMRVCTMYGKFCNQ. The helical transmembrane segment at 142–162 threads the bilayer; that stretch reads MAIGVSSALLASIAMVFVSCI. At 163 to 182 the chain is on the cytoplasmic side; sequence SAFSLFRLYGATKDRRTTPW.

Belongs to the Casparian strip membrane proteins (CASP) family. In terms of assembly, homodimer and heterodimers.

The protein resides in the cell membrane. The sequence is that of CASP-like protein 2B1 from Arabidopsis thaliana (Mouse-ear cress).